Reading from the N-terminus, the 484-residue chain is Probable glycine dehydrogenase (decarboxylating) subunit 2 (484 aa).

The residue at position 264 (lysine 264) is an N6-(pyridoxal phosphate)lysine.

This sequence belongs to the GcvP family. C-terminal subunit subfamily. In terms of assembly, the glycine cleavage system is composed of four proteins: P, T, L and H. In this organism, the P 'protein' is a heterodimer of two subunits. Pyridoxal 5'-phosphate serves as cofactor.

The catalysed reaction is N(6)-[(R)-lipoyl]-L-lysyl-[glycine-cleavage complex H protein] + glycine + H(+) = N(6)-[(R)-S(8)-aminomethyldihydrolipoyl]-L-lysyl-[glycine-cleavage complex H protein] + CO2. The glycine cleavage system catalyzes the degradation of glycine. The P protein binds the alpha-amino group of glycine through its pyridoxal phosphate cofactor; CO(2) is released and the remaining methylamine moiety is then transferred to the lipoamide cofactor of the H protein. The polypeptide is Probable glycine dehydrogenase (decarboxylating) subunit 2 (Legionella pneumophila subsp. pneumophila (strain Philadelphia 1 / ATCC 33152 / DSM 7513)).